The sequence spans 406 residues: Imidazolonepropionase (406 aa).

Fe(3+) is bound by residues His67 and His69. Positions 67 and 69 each coordinate Zn(2+). Positions 76, 139, and 172 each coordinate 4-imidazolone-5-propanoate. Tyr139 lines the N-formimidoyl-L-glutamate pocket. His237 lines the Fe(3+) pocket. His237 serves as a coordination point for Zn(2+). Gln240 lines the 4-imidazolone-5-propanoate pocket. Asp312 contributes to the Fe(3+) binding site. Residue Asp312 coordinates Zn(2+). Residues Asn314 and Gly316 each contribute to the N-formimidoyl-L-glutamate site. Thr317 serves as a coordination point for 4-imidazolone-5-propanoate.

Belongs to the metallo-dependent hydrolases superfamily. HutI family. Requires Zn(2+) as cofactor. It depends on Fe(3+) as a cofactor.

Its subcellular location is the cytoplasm. The enzyme catalyses 4-imidazolone-5-propanoate + H2O = N-formimidoyl-L-glutamate. The protein operates within amino-acid degradation; L-histidine degradation into L-glutamate; N-formimidoyl-L-glutamate from L-histidine: step 3/3. Catalyzes the hydrolytic cleavage of the carbon-nitrogen bond in imidazolone-5-propanoate to yield N-formimidoyl-L-glutamate. It is the third step in the universal histidine degradation pathway. This Paraburkholderia phymatum (strain DSM 17167 / CIP 108236 / LMG 21445 / STM815) (Burkholderia phymatum) protein is Imidazolonepropionase.